Reading from the N-terminus, the 321-residue chain is Glucokinase (321 aa).

8–13 (GDVGGT) provides a ligand contact to ATP.

It belongs to the bacterial glucokinase family.

It is found in the cytoplasm. The enzyme catalyses D-glucose + ATP = D-glucose 6-phosphate + ADP + H(+). The chain is Glucokinase from Shigella boydii serotype 18 (strain CDC 3083-94 / BS512).